The chain runs to 828 residues: MKLSRRSFMKANAVAAAAAAAGLSVPGVARAVVGQQEAIKWDKAPCRFCGTGCGVLVGTQQGRVVACQGDPDAPVNRGLNCIKGYFLPKIMYGKDRLTQPLLRMKNGKYDKEGEFTPITWDQAFDVMEEKFKTALKEKGPESIGMFGSGQWTIWEGYAASKLFKAGFRSNNIDPNARHCMASAVVGFMRTFGMDEPMGCYDDIEQADAFVLWGANMAEMHPILWSRITNRRLSNQNVTVAVLSTYQHRSFELADNGIIFTPQSDLVILNYIANYIIQNNAINQDFFSKHVNLRKGATDIGYGLRPTHPLEKAAKNPGSDASEPMSFEDYKAFVAEYTLEKTAEMTGVPKDQLEQLAQLYADPNKKVISYWTMGFNQHTRGVWANNLVYNLHLLTGKISQPGCGPFSLTGQPSACGTAREVGTFAHRLPADMVVTNEKHRDICEKKWNIPSGTIPAKIGLHAVAQDRALKDGKLNVYWTMCTNNMQAGPNINEERMPGWRDPRNFIIVSDPYPTVSALAADLILPTAMWVEKEGAYGNAERRTQFWRQQVQAPGEAKSDLWQLVQFSRRFKTEEVWPEDLLAKKPELRGKTLYEVLYATPEVSKFPVSELAEDQLNDESRELGFYLQKGLFEEYAWFGRGHGHDLAPFDDYHKARGLRWPVVNGKETQWRYSEGNDPYVKAGEGYKFYGKPDGKAVIFALPFEPAAEAPDEEYDLWLSTGRVLEHWHTGSMTRRVPELHRAFPEAVLFIHPLDAKARDLRRGDKVKVVSRRGEVISIVETRGRNRPPQGLVYMPFFDAAQLVNKLTLDATDPLSKETDFKKCAVKLEKV.

Residues methionine 1–alanine 31 constitute a signal peptide (tat-type signal). The 4Fe-4S Mo/W bis-MGD-type domain occupies isoleucine 39–aspartate 95. [4Fe-4S] cluster contacts are provided by cysteine 46, cysteine 49, cysteine 53, and cysteine 81. Mo-bis(molybdopterin guanine dinucleotide) contacts are provided by residues lysine 83, glutamine 150, asparagine 175, cysteine 179, tryptophan 212–methionine 219, serine 243–histidine 247, glutamine 262–aspartate 264, methionine 372, glutamine 376, asparagine 482, serine 508–aspartate 509, lysine 531, aspartate 558, and threonine 718–threonine 727. Phenylalanine 794 lines the substrate pocket. Mo-bis(molybdopterin guanine dinucleotide) contacts are provided by asparagine 802 and lysine 819.

It belongs to the prokaryotic molybdopterin-containing oxidoreductase family. NasA/NapA/NarB subfamily. In terms of assembly, component of the periplasmic nitrate reductase NapAB complex composed of NapA and NapB. [4Fe-4S] cluster serves as cofactor. Requires Mo-bis(molybdopterin guanine dinucleotide) as cofactor. Post-translationally, predicted to be exported by the Tat system. The position of the signal peptide cleavage has not been experimentally proven.

It localises to the periplasm. It carries out the reaction 2 Fe(II)-[cytochrome] + nitrate + 2 H(+) = 2 Fe(III)-[cytochrome] + nitrite + H2O. Its function is as follows. Catalytic subunit of the periplasmic nitrate reductase complex NapAB. Receives electrons from NapB and catalyzes the reduction of nitrate to nitrite. This Escherichia coli (strain K12 / MC4100 / BW2952) protein is Periplasmic nitrate reductase.